The following is a 165-amino-acid chain: Glucosamine 6-phosphate N-acetyltransferase 1 (165 aa).

One can recognise an N-acetyltransferase domain in the interval 22 to 165 (YRIRPLELAD…EKNVQMGLYF (144 aa)). Residues Ser44, 92 to 95 (KFIR), and 104 to 106 (EDV) contribute to the substrate site. Residue 114–119 (GRGLGE) coordinates acetyl-CoA. 135–136 (YK) is a binding site for substrate. Acetyl-CoA is bound at residue 149–151 (YAK).

The protein belongs to the acetyltransferase family. GNA1 subfamily. In terms of assembly, homodimer. Highly expressed in the root elongation zone and at lower levels in leaves and grains.

The protein localises to the endoplasmic reticulum membrane. The enzyme catalyses D-glucosamine 6-phosphate + acetyl-CoA = N-acetyl-D-glucosamine 6-phosphate + CoA + H(+). Its pathway is nucleotide-sugar biosynthesis; UDP-N-acetyl-alpha-D-glucosamine biosynthesis; N-acetyl-alpha-D-glucosamine 1-phosphate from alpha-D-glucosamine 6-phosphate (route I): step 1/2. In terms of biological role, acetyltransferase involved in de novo biosynthesis of UDP-N-acetylglucosamine (UDP-GlcNAc) in roots and is required for maintaining normal root cell shape. UDP-GlcNAc is an essential metabolite that serves as an initial sugar donor for N-glycan synthesis and thus plays an important role in protein and lipid glycosylation. This Oryza sativa subsp. japonica (Rice) protein is Glucosamine 6-phosphate N-acetyltransferase 1 (GNA1).